The following is a 583-amino-acid chain: Probable GTP diphosphokinase CRSH, chloroplastic (583 aa).

The N-terminal 58 residues, 1–58, are a transit peptide targeting the chloroplast; that stretch reads MSVIRPSPIPIPRCRSQVLHRRLYSIQLIQRRRRRWNPRSEVEDTAIESTARSPEAAG. The 101-residue stretch at 112-212 folds into the HD domain; that stretch reads PLSKALSLSI…MDLVSKLDEM (101 aa). EF-hand domains follow at residues 470-505 and 507-539; these read TTTNQRDRVFCLLDKNGDGMISIEELMEVMEELGAP and EDAEEMMQLLDSNSDGSLSSDEFDTFQKQVEFM. Positions 483, 485, 487, 489, 494, 517, 519, 521, 523, and 528 each coordinate Ca(2+).

Belongs to the RelA/SpoT family. In terms of tissue distribution, expressed in shoots, cotyledons, rosette and cauline leaves, stems, sepals, pistils and siliques.

Its subcellular location is the plastid. It localises to the chloroplast. The catalysed reaction is GTP + ATP = guanosine 3'-diphosphate 5'-triphosphate + AMP. Its activity is regulated as follows. Activated by calcium. Possesses calcium-dependent ppGpp (guanosine 3'-diphosphate 5'-diphosphate) synthetase activity in vitro and is able to functionally complement E.coli relA mutants. Plays an important role in the timing adjustment of pistil and pollen maturation required for successful pollination. May be involved in a rapid plant ppGpp-mediated response to pathogens and other stresses. This chain is Probable GTP diphosphokinase CRSH, chloroplastic (CRSH), found in Arabidopsis thaliana (Mouse-ear cress).